Reading from the N-terminus, the 301-residue chain is MSKQGFKNVPMAPALTWPERLGQYWKLVRGDRPIGSLLLLWPTWWALWLAAGGLPPLWTLFVFTAGVWLTRSAGCVINDYADRWLDPHVERTKSRPLATGAVSGREALWVFVVLMLVAFALVLSLNWLTVALSVPGLFLAASYPYLKRHTHLPQVYLGMAFGWGIPMGFAAVQGSVPLLAWLLYAANILWATAYDTWYAMVDREDDLRMGSKSTAILFGRYDLIAQGVLYALMFAALVLVGLRAGLSIAYWAGLGIAALLVAYEFHIARHRERGPCFRAFLHNNWVGLAIFVGIAASLALR.

The next 7 membrane-spanning stretches (helical) occupy residues 34–54, 57–77, 108–128, 163–183, 222–242, 248–268, and 280–300; these read IGSL…AGGL, LWTL…GCVI, LWVF…LNWL, WGIP…AWLL, DLIA…LVGL, IAYW…FHIA, and FLHN…SLAL.

Belongs to the UbiA prenyltransferase family. The cofactor is Mg(2+).

The protein resides in the cell inner membrane. The catalysed reaction is all-trans-octaprenyl diphosphate + 4-hydroxybenzoate = 4-hydroxy-3-(all-trans-octaprenyl)benzoate + diphosphate. It functions in the pathway cofactor biosynthesis; ubiquinone biosynthesis. Catalyzes the prenylation of para-hydroxybenzoate (PHB) with an all-trans polyprenyl group. Mediates the second step in the final reaction sequence of ubiquinone-8 (UQ-8) biosynthesis, which is the condensation of the polyisoprenoid side chain with PHB, generating the first membrane-bound Q intermediate 3-octaprenyl-4-hydroxybenzoate. The chain is 4-hydroxybenzoate octaprenyltransferase from Xanthomonas campestris pv. campestris (strain 8004).